A 28-amino-acid polypeptide reads, in one-letter code: Arylalkyl acylamidase (28 aa).

As to quaternary structure, homotetramer.

The enzyme catalyses an N-acetylarylalkylamine + H2O = an aralkylamine + acetate. Its activity is regulated as follows. Activated by divalent metal ions. Inhibited by certain thiol reagents. Shows a strict specificity for N-acetyl arylalkylamines but not acetanilide derivatives. The polypeptide is Arylalkyl acylamidase (Pseudomonas putida (Arthrobacter siderocapsulatus)).